The primary structure comprises 265 residues: Large ribosomal subunit protein eL8 (265 aa).

It belongs to the eukaryotic ribosomal protein eL8 family. In terms of assembly, interacts with cmd-1 in the presence of Ca(2+).

The sequence is that of Large ribosomal subunit protein eL8 from Caenorhabditis elegans.